A 100-amino-acid chain; its full sequence is Putative pterin-4-alpha-carbinolamine dehydratase (100 aa).

Belongs to the pterin-4-alpha-carbinolamine dehydratase family.

It carries out the reaction (4aS,6R)-4a-hydroxy-L-erythro-5,6,7,8-tetrahydrobiopterin = (6R)-L-erythro-6,7-dihydrobiopterin + H2O. The polypeptide is Putative pterin-4-alpha-carbinolamine dehydratase (Bradyrhizobium sp. (strain ORS 278)).